Reading from the N-terminus, the 140-residue chain is Putative septation protein SpoVG (140 aa).

Positions 88–127 are disordered; it reads VAPQAGGLQGAEEPTAVEPAPQLQDESELPWEPGDDGEGA. A compositionally biased stretch (acidic residues) spans 112–124; sequence DESELPWEPGDDG.

Belongs to the SpoVG family.

Could be involved in septation. The chain is Putative septation protein SpoVG from Symbiobacterium thermophilum (strain DSM 24528 / JCM 14929 / IAM 14863 / T).